The sequence spans 522 residues: Glucans biosynthesis protein G (522 aa).

The first 33 residues, 1-33 (MLVNILSKKPRAASVRWLGATVLFTLLTSPAWA), serve as a signal peptide directing secretion.

Belongs to the OpgD/OpgG family.

Its subcellular location is the periplasm. Its pathway is glycan metabolism; osmoregulated periplasmic glucan (OPG) biosynthesis. In terms of biological role, involved in the biosynthesis of osmoregulated periplasmic glucans (OPGs). The sequence is that of Glucans biosynthesis protein G from Serratia proteamaculans (strain 568).